The following is a 789-amino-acid chain: MSVAASASRSASTLCSPQIQQGALKEAKVPPHIWAARHWNLGLRLVPGHASVRAGILVLLIFLPSTLCDLGSVYDSSYETVIPERLPGQGSDDPGGKVSYVLLMQGQKQLLHLEVKGHYSERNFPVYSYHHGILGQEVPLLSQACHYEGHIEGVPGSFVSVSICSGLRGVLIKEETAYGIEPLLFSTDFEHILYTMAHQPVVLCNVTPTDSLGDSSQRQGSSKTDELLALSDLWSHAKYVEMFVVVNHQRFQMWGSDVNTTVQAVVDIIALANSFTRGINTEVVLVGLEIWTEGDPIEVPVDLQATLRNFNLWRQEKLMGRVRHDVAHLIVGHRPGANEGQAFLDGACSGGFAAAVEAFHHEDVLLFAALMAHELGHNLGIRHDRPGCTCGPKHLCLMHETISKTSGFSNCSSDHFLRFLHDHRGACLLDRPWHQSHKRRDAHCGNGVVEESEECDCGNACDSHPCCEPTCTLKVGAQCSEGLCCYKCTFKKKGTLCRPAEDVCDLPEYCNGITGECPANSYMQDGTQCDRIYYCSGGLCKNPDKQCARIYGYPARSAPEECYISVNTKANRFGNCGHPTSANLKYEACSNEDIFCGKLVCTDVRYLPQVKPLHSLLQIPYGDDWCWSMDAYNVTDIPDYGDVQGGTYCAPKKVCMESICTGHATLQYDCHPQEMCHGNGVCNNFKHCHCDAGFSPPDCSSGGNGGSVDSGPVGKPADRNLSLFGVGESPDSRMEDEEINLKVVVLVVPIFLIVLLCCLMLIAYLWSEVQEAVSPGSSSTTSSSESESD.

The signal sequence occupies residues 1–68; that stretch reads MSVAASASRS…LLIFLPSTLC (68 aa). The Peptidase M12B domain maps to 238-432; that stretch reads KYVEMFVVVN…HRGACLLDRP (195 aa). An N-linked (GlcNAc...) asparagine glycan is attached at asparagine 259. Cystine bridges form between cysteine 348–cysteine 427, cysteine 388–cysteine 411, cysteine 390–cysteine 396, and cysteine 497–cysteine 517. Residue histidine 373 coordinates Zn(2+). Glutamate 374 is a catalytic residue. Residues histidine 377 and histidine 383 each contribute to the Zn(2+) site. N-linked (GlcNAc...) asparagine glycosylation occurs at asparagine 410. In terms of domain architecture, Disintegrin spans 441–525; sequence DAHCGNGVVE…ECPANSYMQD (85 aa). Asparagine 633 carries an N-linked (GlcNAc...) asparagine glycan. Positions 666-700 constitute an EGF-like domain; that stretch reads LQYDCHPQEMCHGNGVCNNFKHCHCDAGFSPPDCS. 3 disulfide bridges follow: cysteine 670–cysteine 682, cysteine 676–cysteine 688, and cysteine 690–cysteine 699. Asparagine 720 is a glycosylation site (N-linked (GlcNAc...) asparagine). A helical transmembrane segment spans residues 743–763; it reads VVVLVVPIFLIVLLCCLMLIA. Residues 764–789 are Cytoplasmic-facing; sequence YLWSEVQEAVSPGSSSTTSSSESESD.

Heterodimer with ADAM2/fertilin subunit beta.

It is found in the membrane. May be involved in sperm-egg fusion. The polypeptide is Disintegrin and metalloproteinase domain-containing protein 1 (Adam1) (Rattus norvegicus (Rat)).